The following is a 196-amino-acid chain: NADH-quinone oxidoreductase subunit B (196 aa).

Cys63, Cys64, Cys129, and Cys159 together coordinate [4Fe-4S] cluster.

The protein belongs to the complex I 20 kDa subunit family. NDH-1 is composed of 14 different subunits. Subunits NuoB, C, D, E, F, and G constitute the peripheral sector of the complex. The cofactor is [4Fe-4S] cluster.

It localises to the cell inner membrane. It catalyses the reaction a quinone + NADH + 5 H(+)(in) = a quinol + NAD(+) + 4 H(+)(out). Its function is as follows. NDH-1 shuttles electrons from NADH, via FMN and iron-sulfur (Fe-S) centers, to quinones in the respiratory chain. The immediate electron acceptor for the enzyme in this species is believed to be a menaquinone. Couples the redox reaction to proton translocation (for every two electrons transferred, four hydrogen ions are translocated across the cytoplasmic membrane), and thus conserves the redox energy in a proton gradient. The protein is NADH-quinone oxidoreductase subunit B of Bacteroides fragilis (strain ATCC 25285 / DSM 2151 / CCUG 4856 / JCM 11019 / LMG 10263 / NCTC 9343 / Onslow / VPI 2553 / EN-2).